The following is a 62-amino-acid chain: Alpha-elapitoxin-Pc1 (62 aa).

Disulfide bonds link C3/C24, C17/C41, C43/C54, and C55/C60.

It belongs to the three-finger toxin family. Short-chain subfamily. Type I alpha-neurotoxin sub-subfamily. As to expression, expressed by the venom gland.

Its subcellular location is the secreted. Its function is as follows. Bird-specific neurotoxin (tested on chicken) that acts as pseudo-irreversible antagonists at the nicotinic acetylcholine receptor (nAChR) of the skeletal neuromuscular junction. Has no significant effect on the electrically-induced twitches of the rat isolated phrenic nerve-diaphragm preparation. In Pseudechis colletti (Collett's snake), this protein is Alpha-elapitoxin-Pc1.